Reading from the N-terminus, the 406-residue chain is Acetyltransferase sirH (406 aa).

6 consecutive transmembrane segments (helical) span residues 9 to 29 (IFIE…FALG), 32 to 52 (AHTF…CQSL), 63 to 83 (LLSN…WILL), 295 to 315 (VQLF…ALLC), 323 to 343 (SALF…HVIA), and 358 to 378 (FIGF…WVGS).

It belongs to the wax synthase family.

Its subcellular location is the membrane. The protein operates within mycotoxin biosynthesis. Its function is as follows. Acetyltransferase; part of the gene cluster that mediates the biosynthesis of sirodesmin PL, an epipolythiodioxopiperazine (ETP) characterized by a disulfide bridged cyclic dipeptide and that acts as a phytotoxin which is involved in the blackleg didease of canola. SirD catalyzes the O-prenylation of L-tyrosine (L-Tyr) in the presence of dimethylallyl diphosphate (DMAPP) to yield 4-O-dimethylallyl-L-Tyr, and therefore represents probably the first pathway-specific enzyme in the biosynthesis of sirodesmin PL. 4-O-dimethylallyl-L-Tyr, then undergoes condensation with L-Ser in a reaction catalyzed by the non-ribosomal peptide synthase sirP to form the diketopiperazine (DKP) backbone. Further bishydroxylation of the DKP performed by the cytochrome P450 monooxygenase sirC leads to the production of the intermediate phomamide. This step is essential to form the reactive thiol group required for toxicity of sirodesmin PL. The next steps of sirodesmin biosynthesis are not well understood yet, but some predictions could be made from intermediate compounds identification. Phomamide is converted into phomalizarine via oxidation, probably by sirT. Further oxidation, methylation (by sirM or sirN) and reduction steps convert phomalizarine to deacetyl sirodesmin. Finally, acetyltransferase sirH probably acetylates deacetyl sirodesmin to produce sirodesmin PL. This Leptosphaeria maculans (Blackleg fungus) protein is Acetyltransferase sirH.